We begin with the raw amino-acid sequence, 60 residues long: Large ribosomal subunit protein bL33 (60 aa).

Belongs to the bacterial ribosomal protein bL33 family.

The protein is Large ribosomal subunit protein bL33 of Cytophaga hutchinsonii (strain ATCC 33406 / DSM 1761 / CIP 103989 / NBRC 15051 / NCIMB 9469 / D465).